The primary structure comprises 427 residues: 3-phosphoshikimate 1-carboxyvinyltransferase (427 aa).

The 3-phosphoshikimate site is built by Lys-22, Ser-23, and Arg-27. Lys-22 provides a ligand contact to phosphoenolpyruvate. Positions 96 and 124 each coordinate phosphoenolpyruvate. Positions 169, 170, 171, 197, 313, 336, and 340 each coordinate 3-phosphoshikimate. Phosphoenolpyruvate is bound at residue Gln-171. Asp-313 acts as the Proton acceptor in catalysis. Arg-344, Arg-386, and Lys-411 together coordinate phosphoenolpyruvate.

This sequence belongs to the EPSP synthase family. In terms of assembly, monomer.

The protein localises to the cytoplasm. It catalyses the reaction 3-phosphoshikimate + phosphoenolpyruvate = 5-O-(1-carboxyvinyl)-3-phosphoshikimate + phosphate. The protein operates within metabolic intermediate biosynthesis; chorismate biosynthesis; chorismate from D-erythrose 4-phosphate and phosphoenolpyruvate: step 6/7. Functionally, catalyzes the transfer of the enolpyruvyl moiety of phosphoenolpyruvate (PEP) to the 5-hydroxyl of shikimate-3-phosphate (S3P) to produce enolpyruvyl shikimate-3-phosphate and inorganic phosphate. The sequence is that of 3-phosphoshikimate 1-carboxyvinyltransferase from Escherichia coli (strain SMS-3-5 / SECEC).